We begin with the raw amino-acid sequence, 255 residues long: Uracil-DNA glycosylase (255 aa).

Residues 1-20 form a disordered region; that stretch reads MFSASTTPEQPLGLSGDATP. The Proton acceptor role is filled by Asp99.

It belongs to the uracil-DNA glycosylase (UDG) superfamily. UNG family.

Its subcellular location is the host nucleus. The catalysed reaction is Hydrolyzes single-stranded DNA or mismatched double-stranded DNA and polynucleotides, releasing free uracil.. In terms of biological role, excises uracil residues from the DNA which can arise as a result of misincorporation of dUMP residues by DNA polymerase or deamination of cytosines. Therefore may reduce deleterious uracil incorporation into the viral genome, particularly in terminally differentiated cells which lack DNA repair enzymes. The sequence is that of Uracil-DNA glycosylase from Human herpesvirus 2 (strain HG52) (HHV-2).